We begin with the raw amino-acid sequence, 190 residues long: Peptidyl-tRNA hydrolase (190 aa).

A tRNA-binding site is contributed by Tyr18. His23 serves as the catalytic Proton acceptor. 3 residues coordinate tRNA: Phe69, Asn71, and Asn117.

Belongs to the PTH family. Monomer.

Its subcellular location is the cytoplasm. The enzyme catalyses an N-acyl-L-alpha-aminoacyl-tRNA + H2O = an N-acyl-L-amino acid + a tRNA + H(+). Hydrolyzes ribosome-free peptidyl-tRNAs (with 1 or more amino acids incorporated), which drop off the ribosome during protein synthesis, or as a result of ribosome stalling. Functionally, catalyzes the release of premature peptidyl moieties from peptidyl-tRNA molecules trapped in stalled 50S ribosomal subunits, and thus maintains levels of free tRNAs and 50S ribosomes. This chain is Peptidyl-tRNA hydrolase, found in Rhodococcus opacus (strain B4).